Reading from the N-terminus, the 270-residue chain is Regulatory protein RecX (270 aa).

The protein belongs to the RecX family.

The protein localises to the cytoplasm. Modulates RecA activity. This chain is Regulatory protein RecX, found in Bacillus cereus (strain B4264).